A 428-amino-acid chain; its full sequence is Pyruvate kinase (428 aa).

R34 provides a ligand contact to substrate. K(+) contacts are provided by N36, S38, D68, and T69. 36–39 serves as a coordination point for ATP; it reads NFSH. 2 residues coordinate ATP: R75 and K152. E214 lines the Mg(2+) pocket. G237, D238, and T270 together coordinate substrate. D238 is a binding site for Mg(2+).

Belongs to the pyruvate kinase family. Homotetramer. The cofactor is Mg(2+). K(+) is required as a cofactor.

It catalyses the reaction pyruvate + ATP = phosphoenolpyruvate + ADP + H(+). It functions in the pathway carbohydrate degradation; glycolysis; pyruvate from D-glyceraldehyde 3-phosphate: step 5/5. The chain is Pyruvate kinase (PYK1) from Encephalitozoon cuniculi (strain GB-M1) (Microsporidian parasite).